The following is a 297-amino-acid chain: Tryptophan 2,3-dioxygenase (297 aa).

Substrate contacts are provided by residues 51-55, Tyr-113, and Arg-117; that span reads FIIQH. Heme is bound at residue His-240. Thr-254 contributes to the substrate binding site.

Belongs to the tryptophan 2,3-dioxygenase family. In terms of assembly, homotetramer. It depends on heme as a cofactor.

It catalyses the reaction L-tryptophan + O2 = N-formyl-L-kynurenine. It participates in amino-acid degradation; L-tryptophan degradation via kynurenine pathway; L-kynurenine from L-tryptophan: step 1/2. In terms of biological role, heme-dependent dioxygenase that catalyzes the oxidative cleavage of the L-tryptophan (L-Trp) pyrrole ring and converts L-tryptophan to N-formyl-L-kynurenine. Catalyzes the oxidative cleavage of the indole moiety. The sequence is that of Tryptophan 2,3-dioxygenase from Xanthomonas oryzae pv. oryzae (strain MAFF 311018).